The following is a 181-amino-acid chain: ATP-dependent protease subunit HslV (181 aa).

T7 is an active-site residue. 3 residues coordinate Na(+): A162, C165, and T168.

The protein belongs to the peptidase T1B family. HslV subfamily. In terms of assembly, a double ring-shaped homohexamer of HslV is capped on each side by a ring-shaped HslU homohexamer. The assembly of the HslU/HslV complex is dependent on binding of ATP.

The protein resides in the cytoplasm. It carries out the reaction ATP-dependent cleavage of peptide bonds with broad specificity.. With respect to regulation, allosterically activated by HslU binding. Functionally, protease subunit of a proteasome-like degradation complex believed to be a general protein degrading machinery. In Coxiella burnetii (strain RSA 493 / Nine Mile phase I), this protein is ATP-dependent protease subunit HslV.